A 224-amino-acid chain; its full sequence is PHD finger-containing protein 5 (224 aa).

A PHD-type zinc finger spans residues 31-81 (KKPCEVCGSDANELLMMTCFMCRDTREHTYCARVMFQRVPRLWICEECRDF). The Zn(2+) site is built by cysteine 34, cysteine 37, cysteine 49, cysteine 52, histidine 58, cysteine 61, cysteine 75, and cysteine 78. A disordered region spans residues 116–137 (PRTNQVVDNHQDPPIDQTDPSS).

Interacts directly with AIPP3/BDT1.

Functionally, together with AIPP3/BDT1, cooperates to form a BAH-PHD bivalent histone reader complex able to read histone H3 lysine 27 trimethylation (H3K27me3) histone marks in order to regulate transcription, especially to prevent early flowering; promotes AIPP3/BDT1 binding to H3K27me3. This chain is PHD finger-containing protein 5, found in Arabidopsis thaliana (Mouse-ear cress).